The primary structure comprises 261 residues: Small ribosomal subunit protein uS2 (261 aa).

Belongs to the universal ribosomal protein uS2 family.

The polypeptide is Small ribosomal subunit protein uS2 (Thermodesulfovibrio yellowstonii (strain ATCC 51303 / DSM 11347 / YP87)).